The following is a 452-amino-acid chain: Cobyrinate a,c-diamide synthase (452 aa).

The 186-residue stretch at 244 to 429 (RIAVARDRAF…LHLHWGTQAW (186 aa)) folds into the GATase cobBQ-type domain. Cys-325 acts as the Nucleophile in catalysis.

The protein belongs to the CobB/CbiA family. The cofactor is Mg(2+).

It carries out the reaction cob(II)yrinate + 2 L-glutamine + 2 ATP + 2 H2O = cob(II)yrinate a,c diamide + 2 L-glutamate + 2 ADP + 2 phosphate + 2 H(+). It participates in cofactor biosynthesis; adenosylcobalamin biosynthesis; cob(II)yrinate a,c-diamide from sirohydrochlorin (anaerobic route): step 10/10. Catalyzes the ATP-dependent amidation of the two carboxylate groups at positions a and c of cobyrinate, using either L-glutamine or ammonia as the nitrogen source. This Gloeobacter violaceus (strain ATCC 29082 / PCC 7421) protein is Cobyrinate a,c-diamide synthase.